The chain runs to 155 residues: UPF0060 membrane protein MA_3936 (155 aa).

The next 3 membrane-spanning stretches (helical) occupy residues 8 to 28 (LCPF…ICLW), 35 to 55 (AVFG…PTFQ), and 62 to 82 (VYAA…LFVD).

It belongs to the UPF0060 family.

The protein resides in the cell membrane. This is UPF0060 membrane protein MA_3936 from Methanosarcina acetivorans (strain ATCC 35395 / DSM 2834 / JCM 12185 / C2A).